Here is a 470-residue protein sequence, read N- to C-terminus: Argininosuccinate lyase (470 aa).

Belongs to the lyase 1 family. Argininosuccinate lyase subfamily.

It is found in the cytoplasm. The catalysed reaction is 2-(N(omega)-L-arginino)succinate = fumarate + L-arginine. The protein operates within amino-acid biosynthesis; L-arginine biosynthesis; L-arginine from L-ornithine and carbamoyl phosphate: step 3/3. This chain is Argininosuccinate lyase, found in Mycolicibacterium gilvum (strain PYR-GCK) (Mycobacterium gilvum (strain PYR-GCK)).